The primary structure comprises 207 residues: Sodium/potassium-transporting ATPase subunit beta-1-interacting protein 1 (207 aa).

Residues 1–21 form the signal peptide; that stretch reads MGKCSGRCTLVAFCCLQLVAA. Over 22 to 34 the chain is Extracellular; that stretch reads LERQIFDFLGYQW. A helical transmembrane segment spans residues 35–55; the sequence is APILANFLHIMAVILGIFGTV. Residues 56-61 lie on the Cytoplasmic side of the membrane; that stretch reads QYRSRY. The helical transmembrane segment at 62 to 82 threads the bilayer; that stretch reads LILYAAWLVLWVGWNAFIICF. Residues 83 to 146 are Extracellular-facing; sequence YLEVGQLSQD…GCLLDYPYIE (64 aa). Residue N100 is glycosylated (N-linked (GlcNAc...) asparagine). Residues 147–167 form a helical membrane-spanning segment; that stretch reads ALSSALQIFLALFGFVFACYV. Topologically, residues 168-207 are cytoplasmic; sequence SKVFLEEEDSFDFIGGFDSYGYQAPQKTSHLQLQPLYTSG.

Belongs to the NKAIN family. Interacts with ATP1B1 C-terminus.

Its subcellular location is the cell membrane. This is Sodium/potassium-transporting ATPase subunit beta-1-interacting protein 1 (NKAIN1) from Homo sapiens (Human).